Reading from the N-terminus, the 157-residue chain is Crossover junction endodeoxyribonuclease RuvC (157 aa).

Catalysis depends on residues Asp-7, Glu-67, and Asp-140. Residues Asp-7, Glu-67, and Asp-140 each coordinate Mg(2+).

It belongs to the RuvC family. In terms of assembly, homodimer which binds Holliday junction (HJ) DNA. The HJ becomes 2-fold symmetrical on binding to RuvC with unstacked arms; it has a different conformation from HJ DNA in complex with RuvA. In the full resolvosome a probable DNA-RuvA(4)-RuvB(12)-RuvC(2) complex forms which resolves the HJ. Mg(2+) is required as a cofactor.

Its subcellular location is the cytoplasm. The enzyme catalyses Endonucleolytic cleavage at a junction such as a reciprocal single-stranded crossover between two homologous DNA duplexes (Holliday junction).. The RuvA-RuvB-RuvC complex processes Holliday junction (HJ) DNA during genetic recombination and DNA repair. Endonuclease that resolves HJ intermediates. Cleaves cruciform DNA by making single-stranded nicks across the HJ at symmetrical positions within the homologous arms, yielding a 5'-phosphate and a 3'-hydroxyl group; requires a central core of homology in the junction. The consensus cleavage sequence is 5'-(A/T)TT(C/G)-3'. Cleavage occurs on the 3'-side of the TT dinucleotide at the point of strand exchange. HJ branch migration catalyzed by RuvA-RuvB allows RuvC to scan DNA until it finds its consensus sequence, where it cleaves and resolves the cruciform DNA. The protein is Crossover junction endodeoxyribonuclease RuvC of Rickettsia africae (strain ESF-5).